Here is a 280-residue protein sequence, read N- to C-terminus: Putative pyruvate, phosphate dikinase regulatory protein (280 aa).

154-161 contacts ADP; sequence GVSRTSKT.

Belongs to the pyruvate, phosphate/water dikinase regulatory protein family. PDRP subfamily.

The catalysed reaction is N(tele)-phospho-L-histidyl/L-threonyl-[pyruvate, phosphate dikinase] + ADP = N(tele)-phospho-L-histidyl/O-phospho-L-threonyl-[pyruvate, phosphate dikinase] + AMP + H(+). It carries out the reaction N(tele)-phospho-L-histidyl/O-phospho-L-threonyl-[pyruvate, phosphate dikinase] + phosphate + H(+) = N(tele)-phospho-L-histidyl/L-threonyl-[pyruvate, phosphate dikinase] + diphosphate. Its function is as follows. Bifunctional serine/threonine kinase and phosphorylase involved in the regulation of the pyruvate, phosphate dikinase (PPDK) by catalyzing its phosphorylation/dephosphorylation. This chain is Putative pyruvate, phosphate dikinase regulatory protein, found in Nitrobacter hamburgensis (strain DSM 10229 / NCIMB 13809 / X14).